The sequence spans 89 residues: Small ribosomal subunit protein bS18 (89 aa).

Belongs to the bacterial ribosomal protein bS18 family. Part of the 30S ribosomal subunit. Forms a tight heterodimer with protein bS6.

In terms of biological role, binds as a heterodimer with protein bS6 to the central domain of the 16S rRNA, where it helps stabilize the platform of the 30S subunit. The sequence is that of Small ribosomal subunit protein bS18 from Bdellovibrio bacteriovorus (strain ATCC 15356 / DSM 50701 / NCIMB 9529 / HD100).